The chain runs to 428 residues: Elongation factor 1-alpha (428 aa).

The tr-type G domain occupies 5–217 (KPHVNIVFIG…DQIPEPEKPV (213 aa)). Residues 14-21 (GHVDHGKS) form a G1 region. GTP is bound at residue 14 to 21 (GHVDHGKS). Mg(2+) is bound at residue S21. Residues 68 to 72 (GITID) form a G2 region. Residues 89 to 92 (DAPG) are G3. GTP contacts are provided by residues 89 to 93 (DAPGH) and 144 to 147 (NKMD). Positions 144–147 (NKMD) are G4. Positions 181-183 (SAW) are G5.

Belongs to the TRAFAC class translation factor GTPase superfamily. Classic translation factor GTPase family. EF-Tu/EF-1A subfamily.

The protein resides in the cytoplasm. The catalysed reaction is GTP + H2O = GDP + phosphate + H(+). Functionally, GTP hydrolase that promotes the GTP-dependent binding of aminoacyl-tRNA to the A-site of ribosomes during protein biosynthesis. The chain is Elongation factor 1-alpha from Pyrococcus abyssi (strain GE5 / Orsay).